A 126-amino-acid chain; its full sequence is Small ribosomal subunit protein uS12 (126 aa).

Residue aspartate 89 is modified to 3-methylthioaspartic acid.

It belongs to the universal ribosomal protein uS12 family. As to quaternary structure, part of the 30S ribosomal subunit. Contacts proteins S8 and S17. May interact with IF1 in the 30S initiation complex.

In terms of biological role, with S4 and S5 plays an important role in translational accuracy. Interacts with and stabilizes bases of the 16S rRNA that are involved in tRNA selection in the A site and with the mRNA backbone. Located at the interface of the 30S and 50S subunits, it traverses the body of the 30S subunit contacting proteins on the other side and probably holding the rRNA structure together. The combined cluster of proteins S8, S12 and S17 appears to hold together the shoulder and platform of the 30S subunit. The chain is Small ribosomal subunit protein uS12 from Carboxydothermus hydrogenoformans (strain ATCC BAA-161 / DSM 6008 / Z-2901).